A 177-amino-acid polypeptide reads, in one-letter code: Cytochrome c oxidase assembly protein CtaG (177 aa).

At 1–8 (MTQKAKNT) the chain is on the cytoplasmic side. A helical; Signal-anchor for type II membrane protein transmembrane segment spans residues 9–29 (IYLLILIILSMLCLVYASVPL). The Periplasmic portion of the chain corresponds to 30–177 (YSIFCKVTGY…TFFKYKETTK (148 aa)).

It belongs to the COX11/CtaG family.

It localises to the cell inner membrane. Exerts its effect at some terminal stage of cytochrome c oxidase synthesis, probably by being involved in the insertion of the copper B into subunit I. The polypeptide is Cytochrome c oxidase assembly protein CtaG (Ehrlichia ruminantium (strain Gardel)).